The primary structure comprises 602 residues: Elongation factor 4 (602 aa).

Positions 7–189 constitute a tr-type G domain; the sequence is KKIRNFSIIA…SIVKNVPSPK (183 aa). GTP-binding positions include 19–24 and 136–139; these read DHGKST and NKID.

Belongs to the TRAFAC class translation factor GTPase superfamily. Classic translation factor GTPase family. LepA subfamily.

It localises to the cell membrane. The enzyme catalyses GTP + H2O = GDP + phosphate + H(+). In terms of biological role, required for accurate and efficient protein synthesis under certain stress conditions. May act as a fidelity factor of the translation reaction, by catalyzing a one-codon backward translocation of tRNAs on improperly translocated ribosomes. Back-translocation proceeds from a post-translocation (POST) complex to a pre-translocation (PRE) complex, thus giving elongation factor G a second chance to translocate the tRNAs correctly. Binds to ribosomes in a GTP-dependent manner. The polypeptide is Elongation factor 4 (Alkaliphilus oremlandii (strain OhILAs) (Clostridium oremlandii (strain OhILAs))).